The sequence spans 344 residues: Dihydroorotase (344 aa).

Zn(2+) contacts are provided by H14 and H16. Substrate contacts are provided by residues 16–18 and N42; that span reads HLR. Residues K100, H137, and H175 each coordinate Zn(2+). K100 carries the post-translational modification N6-carboxylysine. H137 contributes to the substrate binding site. L220 contacts substrate. D248 serves as a coordination point for Zn(2+). Residue D248 is part of the active site. Positions 252 and 264 each coordinate substrate.

It belongs to the metallo-dependent hydrolases superfamily. DHOase family. Class II DHOase subfamily. In terms of assembly, homodimer. The cofactor is Zn(2+).

It carries out the reaction (S)-dihydroorotate + H2O = N-carbamoyl-L-aspartate + H(+). It functions in the pathway pyrimidine metabolism; UMP biosynthesis via de novo pathway; (S)-dihydroorotate from bicarbonate: step 3/3. In terms of biological role, catalyzes the reversible cyclization of carbamoyl aspartate to dihydroorotate. This chain is Dihydroorotase, found in Cupriavidus necator (strain ATCC 17699 / DSM 428 / KCTC 22496 / NCIMB 10442 / H16 / Stanier 337) (Ralstonia eutropha).